A 953-amino-acid polypeptide reads, in one-letter code: Isoleucine--tRNA ligase (953 aa).

The short motif at 57–67 (PYANGDIHIGH) is the 'HIGH' region element. Glu582 serves as a coordination point for L-isoleucyl-5'-AMP. Residues 623–627 (KMSKS) carry the 'KMSKS' region motif. Position 626 (Lys626) interacts with ATP. The Zn(2+) site is built by Cys916, Cys919, Cys936, and Cys939.

This sequence belongs to the class-I aminoacyl-tRNA synthetase family. IleS type 1 subfamily. Monomer. Requires Zn(2+) as cofactor.

It localises to the cytoplasm. It carries out the reaction tRNA(Ile) + L-isoleucine + ATP = L-isoleucyl-tRNA(Ile) + AMP + diphosphate. Its function is as follows. Catalyzes the attachment of isoleucine to tRNA(Ile). As IleRS can inadvertently accommodate and process structurally similar amino acids such as valine, to avoid such errors it has two additional distinct tRNA(Ile)-dependent editing activities. One activity is designated as 'pretransfer' editing and involves the hydrolysis of activated Val-AMP. The other activity is designated 'posttransfer' editing and involves deacylation of mischarged Val-tRNA(Ile). The protein is Isoleucine--tRNA ligase of Bordetella petrii (strain ATCC BAA-461 / DSM 12804 / CCUG 43448).